A 238-amino-acid polypeptide reads, in one-letter code: Probable transglycosylase SceD 3 (238 aa).

The first 27 residues, 1–27, serve as a signal peptide directing secretion; it reads MKKTVVASTLAVGLGVTGFAAGNSADA. The disordered stretch occupies residues 82–161; sequence YGQGSTNAPA…SEASEGSSVN (80 aa). Over residues 89–156 the composition is skewed to low complexity; the sequence is APAQETAEQP…NESSSSEASE (68 aa).

The protein belongs to the transglycosylase family. SceD subfamily.

It is found in the secreted. Its function is as follows. Is able to cleave peptidoglycan and affects clumping and separation of bacterial cells. This Staphylococcus saprophyticus subsp. saprophyticus (strain ATCC 15305 / DSM 20229 / NCIMB 8711 / NCTC 7292 / S-41) protein is Probable transglycosylase SceD 3 (sceD3).